A 260-amino-acid chain; its full sequence is Putative protein phosphatase (260 aa).

Residues 9-254 (FTGLSKKGPV…DNITAALVNL (246 aa)) form the PPM-type phosphatase domain.

The catalysed reaction is O-phospho-L-seryl-[protein] + H2O = L-seryl-[protein] + phosphate. It catalyses the reaction O-phospho-L-threonyl-[protein] + H2O = L-threonyl-[protein] + phosphate. The protein is Putative protein phosphatase of Mycoplasma genitalium (strain ATCC 33530 / DSM 19775 / NCTC 10195 / G37) (Mycoplasmoides genitalium).